A 445-amino-acid chain; its full sequence is Phosphoglucosamine mutase (445 aa).

Residue S101 is the Phosphoserine intermediate of the active site. Residues S101, D240, D242, and D244 each contribute to the Mg(2+) site. S101 carries the phosphoserine modification.

Belongs to the phosphohexose mutase family. Mg(2+) serves as cofactor. Activated by phosphorylation.

The enzyme catalyses alpha-D-glucosamine 1-phosphate = D-glucosamine 6-phosphate. Functionally, catalyzes the conversion of glucosamine-6-phosphate to glucosamine-1-phosphate. This chain is Phosphoglucosamine mutase, found in Azotobacter vinelandii (strain DJ / ATCC BAA-1303).